The following is a 155-amino-acid chain: MASRSAGTLITHNNATYIPPALMPGYRGHIPTASFTYGDTYGSTSARCFQDFRSTVLNSSRSPYCQGGQFPTGNASDPALVIGHRARGWDRFLHSPSWSRYNGDFKRAQELTQFHKAAEQHRDHYRDKSGSVHQVPHFIVPVKNPETFPLPQQVL.

It belongs to the CIMIP2 family.

It is found in the cytoplasm. It localises to the cytoskeleton. Its subcellular location is the cilium axoneme. Functionally, microtubule inner protein (MIP) part of the dynein-decorated doublet microtubules (DMTs) in cilia axoneme, which is required for motile cilia beating. This chain is Ciliary microtubule inner protein 2C (cimip2c), found in Xenopus tropicalis (Western clawed frog).